Here is a 583-residue protein sequence, read N- to C-terminus: Probable cysteine--tRNA ligase, mitochondrial (583 aa).

Residue cysteine 82 coordinates Zn(2+). Glycine 83 provides a ligand contact to L-cysteine. Positions 84-94 (PTVYSSSHIGH) match the 'HIGH' region motif. L-cysteine is bound at residue threonine 123. The short motif at 128-131 (KIIN) is the 'KIIK' region element. Positions 271, 296, and 300 each coordinate Zn(2+). Histidine 296 serves as a coordination point for L-cysteine. A 'KMSKS' region motif is present at residues 337–341 (KMSKS). An ATP-binding site is contributed by lysine 340.

Belongs to the class-I aminoacyl-tRNA synthetase family. Requires Zn(2+) as cofactor.

The protein localises to the mitochondrion. The catalysed reaction is tRNA(Cys) + L-cysteine + ATP = L-cysteinyl-tRNA(Cys) + AMP + diphosphate. Functionally, mitochondrial cysteine-specific aminoacyl-tRNA synthetase that catalyzes the ATP-dependent ligation of cysteine to tRNA(Cys). Its function is as follows. In addition to its role as an aminoacyl-tRNA synthetase, has also cysteine persulfide synthase activity. Produces reactive persulfide species such as cysteine persulfide (CysSSH) from substrate cysteine and mediate direct incorporation of CysSSH into proteins during translations, resulting in protein persulfides and polysulfides. CysSSHs behave as potent antioxidants and cellular protectants. The chain is Probable cysteine--tRNA ligase, mitochondrial (mcysS) from Dictyostelium discoideum (Social amoeba).